Here is a 1100-residue protein sequence, read N- to C-terminus: DNA-directed RNA polymerase subunit beta (1100 aa).

A disordered region spans residues 1064–1100 (YEEDKEVDLMADVNQRRTPSRPTYESMSVGDIDDDDD). Over residues 1079-1089 (RRTPSRPTYES) the composition is skewed to polar residues.

The protein belongs to the RNA polymerase beta chain family. As to quaternary structure, in cyanobacteria the RNAP catalytic core is composed of 2 alpha, 1 beta, 1 beta', 1 gamma and 1 omega subunit. When a sigma factor is associated with the core the holoenzyme is formed, which can initiate transcription.

It catalyses the reaction RNA(n) + a ribonucleoside 5'-triphosphate = RNA(n+1) + diphosphate. Functionally, DNA-dependent RNA polymerase catalyzes the transcription of DNA into RNA using the four ribonucleoside triphosphates as substrates. The protein is DNA-directed RNA polymerase subunit beta of Synechococcus elongatus (strain ATCC 33912 / PCC 7942 / FACHB-805) (Anacystis nidulans R2).